Here is a 460-residue protein sequence, read N- to C-terminus: Methylenetetrahydrofolate--tRNA-(uracil-5-)-methyltransferase TrmFO (460 aa).

Residue 12–17 participates in FAD binding; it reads GGGLAG.

The protein belongs to the MnmG family. TrmFO subfamily. FAD serves as cofactor.

The protein resides in the cytoplasm. It carries out the reaction uridine(54) in tRNA + (6R)-5,10-methylene-5,6,7,8-tetrahydrofolate + NADH + H(+) = 5-methyluridine(54) in tRNA + (6S)-5,6,7,8-tetrahydrofolate + NAD(+). It catalyses the reaction uridine(54) in tRNA + (6R)-5,10-methylene-5,6,7,8-tetrahydrofolate + NADPH + H(+) = 5-methyluridine(54) in tRNA + (6S)-5,6,7,8-tetrahydrofolate + NADP(+). Its function is as follows. Catalyzes the folate-dependent formation of 5-methyl-uridine at position 54 (M-5-U54) in all tRNAs. The protein is Methylenetetrahydrofolate--tRNA-(uracil-5-)-methyltransferase TrmFO of Crocosphaera subtropica (strain ATCC 51142 / BH68) (Cyanothece sp. (strain ATCC 51142)).